Here is a 125-residue protein sequence, read N- to C-terminus: Temptin (125 aa).

Positions 1–22 are cleaved as a signal peptide; the sequence is MEQKRTLRVFLAVSLLCALANA. 2 disulfide bridges follow: Cys40–Cys125 and Cys79–Cys99. The disordered stretch occupies residues 78–125; the sequence is LCDMDSDGDGRSNGVELGDPECVWSQGETPARTTDLSHPGFDEATVSC. The span at 103 to 113 shows a compositional bias: polar residues; the sequence is QGETPARTTDL.

In terms of assembly, binds to attractin and enticin. As to expression, produced by the albumen gland of the egg cordons.

It localises to the secreted. Functionally, a component of the complex of water-borne protein pheromones that stimulates attraction and mating behavior. Modulates pheromone signaling by direct binding to attractin. The chain is Temptin from Aplysia californica (California sea hare).